The chain runs to 471 residues: UDP-N-acetylmuramate--L-alanine ligase (471 aa).

114–120 (GTHGKTT) is an ATP binding site.

This sequence belongs to the MurCDEF family.

It localises to the cytoplasm. It catalyses the reaction UDP-N-acetyl-alpha-D-muramate + L-alanine + ATP = UDP-N-acetyl-alpha-D-muramoyl-L-alanine + ADP + phosphate + H(+). Its pathway is cell wall biogenesis; peptidoglycan biosynthesis. Functionally, cell wall formation. The sequence is that of UDP-N-acetylmuramate--L-alanine ligase from Rhizobium johnstonii (strain DSM 114642 / LMG 32736 / 3841) (Rhizobium leguminosarum bv. viciae).